The following is a 194-amino-acid chain: 7-methyl-GTP pyrophosphatase (194 aa).

The Proton acceptor role is filled by D71.

Belongs to the Maf family. YceF subfamily. It depends on a divalent metal cation as a cofactor.

It localises to the cytoplasm. The enzyme catalyses N(7)-methyl-GTP + H2O = N(7)-methyl-GMP + diphosphate + H(+). Functionally, nucleoside triphosphate pyrophosphatase that hydrolyzes 7-methyl-GTP (m(7)GTP). May have a dual role in cell division arrest and in preventing the incorporation of modified nucleotides into cellular nucleic acids. The sequence is that of 7-methyl-GTP pyrophosphatase from Aromatoleum aromaticum (strain DSM 19018 / LMG 30748 / EbN1) (Azoarcus sp. (strain EbN1)).